The chain runs to 149 residues: Large ribosomal subunit protein bL9 (149 aa).

Belongs to the bacterial ribosomal protein bL9 family.

Its function is as follows. Binds to the 23S rRNA. This chain is Large ribosomal subunit protein bL9, found in Xylella fastidiosa (strain 9a5c).